The following is a 114-amino-acid chain: TYRO protein tyrosine kinase-binding protein (114 aa).

The N-terminal stretch at 1-21 (MGALEPSWCLLFLPVLLTVGG) is a signal peptide. Residues 22–42 (LSPVQAQSDTFPRCDCSSVSP) lie on the Extracellular side of the membrane. Residues 43–63 (GVLAGIVLGDLVLTLLIALAV) form a helical membrane-spanning segment. Asp-52 contacts Ca(2+). Residues 64–114 (YSLGRLVSRGQGTAEGTRKQHIAETESPYQELQGQRPEVYSDLNTQRQYYR) lie on the Cytoplasmic side of the membrane. The disordered stretch occupies residues 74–107 (QGTAEGTRKQHIAETESPYQELQGQRPEVYSDLN). An ITAM domain is found at 81-109 (RKQHIAETESPYQELQGQRPEVYSDLNTQ). Phosphotyrosine occurs at positions 92 and 103.

This sequence belongs to the TYROBP family. In terms of assembly, homodimer; disulfide-linked. Homotrimer; disulfide-linked. Homotetramer; disulfide-linked. Homotrimers and homotetramers form when low levels of partner receptors are available and are competitive with assembly with interacting receptors. They may represent alternative oligomerization states or may be intermediates in the receptor assembly process. Binding of a metal cation aids in homooligomerization through coordination of the metal ion by the subunits of the oligomer. Interacts with TREM1. Interacts with TREM2. Interacts with TREM3. Interacts with CLECSF5. Interacts with CD300LB and CD300C2. Interacts with CD300E. Interacts (via ITAM domain) with SYK (via SH2 domains); activates SYK mediating neutrophil and macrophage integrin-mediated activation. Interacts (via transmembrane domain) with KLRK1 isoform 2 (via transmembrane domain); the interaction is required for KLRK1 NK cell surface expression and NK cell-mediated cytotoxicity. Interacts with KLRC2. Interacts with CD300H. Interacts with KLRD1. Interacts with KLRA4 and KLRA8. Post-translationally, tyrosine phosphorylated. Following ligand binding by associated receptors, tyrosine phosphorylated in the ITAM domain which leads to activation of additional tyrosine kinases and subsequent cell activation. Expressed on microglia (at protein level). Expressed on oligodendrocytes (at protein level). Expressed on macrophages and osteoclasts. Expressed on dendritic cells in liver, spleen, kidney and lung with highest levels in liver dendritic cells.

Its subcellular location is the cell membrane. Adapter protein which non-covalently associates with activating receptors found on the surface of a variety of immune cells to mediate signaling and cell activation following ligand binding by the receptors. TYROBP is tyrosine-phosphorylated in the ITAM domain following ligand binding by the associated receptors which leads to activation of additional tyrosine kinases and subsequent cell activation. Also has an inhibitory role in some cells. Non-covalently associates with activating receptors of the CD300 family to mediate cell activation. Also mediates cell activation through association with activating receptors of the CD200R family. Required for neutrophil activation mediated by integrin. Required for the activation of myeloid cells mediated by the CLEC5A/MDL1 receptor. Associates with natural killer (NK) cell receptors such as the KLRD1/KLRC2 heterodimer to mediate NK cell activation. Also associates non-covalently with the NK cell receptors KLRA4/LY49D and KLRA8/LY49H which leads to NK cell activation. Associates with TREM1 to mediate activation of neutrophils and monocytes. Associates with TREM2 on monocyte-derived dendritic cells to mediate up-regulation of chemokine receptor CCR7 and dendritic cell maturation and survival. Association with TREM2 mediates cytokine-induced formation of multinucleated giant cells which are formed by the fusion of macrophages. Stabilizes the TREM2 C-terminal fragment (TREM2-CTF) which is produced by TREM2 ectodomain shedding. In microglia, required with TREM2 for phagocytosis of apoptotic neurons. Required with ITGAM/CD11B in microglia to control production of microglial superoxide ions which promote the neuronal apoptosis that occurs during brain development. Promotes pro-inflammatory responses in microglia following nerve injury which accelerates degeneration of injured neurons. Positively regulates the expression of the IRAK3/IRAK-M kinase and IL10 production by liver dendritic cells and inhibits their T cell allostimulatory ability. Negatively regulates B cell proliferation. Required for CSF1-mediated osteoclast cytoskeletal organization. Positively regulates multinucleation during osteoclast development. The protein is TYRO protein tyrosine kinase-binding protein of Mus musculus (Mouse).